The following is a 439-amino-acid chain: Ribosomal protein uS12 methylthiotransferase RimO (439 aa).

The region spanning 4 to 114 is the MTTase N-terminal domain; sequence PKVGFVSLGR…VVRAVHGVAP (111 aa). One can recognise a Radical SAM core domain in the interval 133–370; it reads LTPRHYAYLK…MEHQQAISTA (238 aa). [4Fe-4S] cluster contacts are provided by C147, C151, and C154. The 67-residue stretch at 373–439 folds into the TRAM domain; that stretch reads STRVGREIDV…EYDLWGERIA (67 aa).

The protein belongs to the methylthiotransferase family. RimO subfamily. It depends on [4Fe-4S] cluster as a cofactor.

The protein resides in the cytoplasm. The enzyme catalyses L-aspartate(89)-[ribosomal protein uS12]-hydrogen + (sulfur carrier)-SH + AH2 + 2 S-adenosyl-L-methionine = 3-methylsulfanyl-L-aspartate(89)-[ribosomal protein uS12]-hydrogen + (sulfur carrier)-H + 5'-deoxyadenosine + L-methionine + A + S-adenosyl-L-homocysteine + 2 H(+). In terms of biological role, catalyzes the methylthiolation of an aspartic acid residue of ribosomal protein uS12. This chain is Ribosomal protein uS12 methylthiotransferase RimO, found in Bordetella bronchiseptica (strain ATCC BAA-588 / NCTC 13252 / RB50) (Alcaligenes bronchisepticus).